An 898-amino-acid polypeptide reads, in one-letter code: Serine/threonine-protein kinase TAO3 (898 aa).

The Protein kinase domain occupies 24-277; that stretch reads FIGLHEIGHG…SAELLRHDFV (254 aa). Residues 30–38 and lysine 53 each bind ATP; that span reads IGHGSFGAV. Aspartate 147 (proton acceptor) is an active-site residue. 2 disordered regions span residues 316–362 and 405–425; these read TRNG…SQSS and DEAG…VQSQ. Serine 324 carries the phosphoserine; by ATM modification. A phosphoserine mark is found at serine 331, serine 343, serine 346, and serine 349. A compositionally biased stretch (polar residues) spans 334–351; that stretch reads GTSLNREMDSLGSNHSIP. A compositionally biased stretch (low complexity) spans 352–362; that stretch reads SMSVSTGSQSS. Position 357 is a phosphothreonine (threonine 357). A Phosphoserine modification is found at serine 359. The segment covering 405–416 has biased composition (basic and acidic residues); it reads DEAGHGDPRPEP. A Phosphoserine modification is found at serine 442. 3 coiled-coil regions span residues 452–502, 548–649, and 754–879; these read EQEN…THAN, FLES…HAML, and LKTL…DMES. Residues 565-596 are disordered; it reads EEMNEDHSTPKKEKQERISKHKENLQHTQAEE. Lysine 830 carries the post-translational modification N6-acetyllysine.

It belongs to the protein kinase superfamily. STE Ser/Thr protein kinase family. STE20 subfamily. In terms of assembly, self-associates. Interacts with ERN1 and TRAF2. Interaction with TRAF2 is facilitated under ER stress conditions, such as treatment with tunicamycin, and may promote TRAF2 phosphorylation. Interacts (via N-terminus) with STK25; the interaction promotes STK25 abundance at the level of protein expression and/or stability. (Microbial infection) Interacts with herpes simplex virus 1 UL37 protein. In terms of processing, autophosphorylated. Phosphorylation at Ser-324 by ATM following DNA damage is required for activation of the p38/MAPK14 stress-activated MAPK cascade. Phosphorylated at Ser-324 and on Tyr residues during T cell activation. Phosphorylated by LRRK2. As to expression, ubiquitously expressed at a low level, and highly expressed in peripheral blood leukocytes (PBLs), thymus, spleen, kidney, skeletal muscle, heart and liver.

It is found in the cytoplasm. The protein localises to the cell membrane. It localises to the membrane raft. Its subcellular location is the lipid droplet. It carries out the reaction L-seryl-[protein] + ATP = O-phospho-L-seryl-[protein] + ADP + H(+). The catalysed reaction is L-threonyl-[protein] + ATP = O-phospho-L-threonyl-[protein] + ADP + H(+). Functionally, serine/threonine-protein kinase that acts as a regulator of the p38/MAPK14 stress-activated MAPK cascade and of the MAPK8/JNK cascade. In response to DNA damage, involved in the G2/M transition DNA damage checkpoint by activating the p38/MAPK14 stress-activated MAPK cascade, probably by mediating phosphorylation of upstream MAP2K3 and MAP2K6 kinases. Inhibits basal activity of the MAPK8/JNK cascade and diminishes its activation in response to epidermal growth factor (EGF). Positively regulates canonical T cell receptor (TCR) signaling by preventing early PTPN6/SHP1-mediated inactivation of LCK, ensuring sustained TCR signaling that is required for optimal activation and differentiation of T cells. Phosphorylates PTPN6/SHP1 on 'Thr-394', leading to its polyubiquitination and subsequent proteasomal degradation. Required for cell surface expression of metalloprotease ADAM10 on type 1 transitional B cells which is necessary for their NOTCH-mediated development into marginal zone B cells. Also required for the NOTCH-mediated terminal differentiation of splenic conventional type 2 dendritic cells. Positively regulates osteoblast differentiation by acting as an upstream activator of the JNK pathway. Promotes JNK signaling in hepatocytes and positively regulates hepatocyte lipid storage by inhibiting beta-oxidation and triacylglycerol secretion while enhancing lipid synthesis. Restricts age-associated inflammation by negatively regulating differentiation of macrophages and their production of pro-inflammatory cytokines. Plays a role in negatively regulating the abundance of regulatory T cells in white adipose tissue. The protein is Serine/threonine-protein kinase TAO3 (TAOK3) of Homo sapiens (Human).